The following is a 787-amino-acid chain: ER degradation-enhancing alpha-mannosidase-like protein 1 (787 aa).

The N-terminal stretch at 1-22 (MGSLHSIFCVCLILLCIFKENS) is a signal peptide. N-linked (GlcNAc...) asparagine glycans are attached at residues Asn479, Asn609, Asn670, Asn693, and Asn756.

It belongs to the glycosyl hydrolase 47 family.

The protein localises to the endoplasmic reticulum lumen. Functionally, alpha-mannosidase-like protein involved in endoplasmic reticulum-associated degradation (ERAD). Delivers misfolded glycoproteins to proteasomes. It lacks mannosidase activity. This Schizosaccharomyces pombe (strain 972 / ATCC 24843) (Fission yeast) protein is ER degradation-enhancing alpha-mannosidase-like protein 1 (mnl1).